The chain runs to 468 residues: Chromosomal replication initiator protein DnaA (468 aa).

The tract at residues 1 to 84 (MSSSLWLQCL…RFEVGSRPVS (84 aa)) is domain I, interacts with DnaA modulators. Residues 80-106 (SRPVSAPKPAPTRTPADVAAESSAPAQ) form a disordered region. The segment at 84-131 (SAPKPAPTRTPADVAAESSAPAQLQARKPVHKTWDDDPQAIAAINHRS) is domain II. Positions 132-348 (NMNPKHKFDN…GALNRVIANA (217 aa)) are domain III, AAA+ region. ATP contacts are provided by G176, G178, K179, and T180. A domain IV, binds dsDNA region spans residues 349–468 (NFTGRPITID…YSNLIRTLSS (120 aa)).

It belongs to the DnaA family. Oligomerizes as a right-handed, spiral filament on DNA at oriC.

Its subcellular location is the cytoplasm. Plays an essential role in the initiation and regulation of chromosomal replication. ATP-DnaA binds to the origin of replication (oriC) to initiate formation of the DNA replication initiation complex once per cell cycle. Binds the DnaA box (a 9 base pair repeat at the origin) and separates the double-stranded (ds)DNA. Forms a right-handed helical filament on oriC DNA; dsDNA binds to the exterior of the filament while single-stranded (ss)DNA is stabiized in the filament's interior. The ATP-DnaA-oriC complex binds and stabilizes one strand of the AT-rich DNA unwinding element (DUE), permitting loading of DNA polymerase. After initiation quickly degrades to an ADP-DnaA complex that is not apt for DNA replication. Binds acidic phospholipids. This Vibrio parahaemolyticus serotype O3:K6 (strain RIMD 2210633) protein is Chromosomal replication initiator protein DnaA.